A 262-amino-acid chain; its full sequence is Glucosamine-6-phosphate deaminase (262 aa).

Residue aspartate 63 is the Proton acceptor; for enolization step of the active site. Asparagine 129 functions as the For ring-opening step in the catalytic mechanism. Histidine 131 acts as the Proton acceptor; for ring-opening step in catalysis. Glutamate 136 acts as the For ring-opening step in catalysis.

It belongs to the glucosamine/galactosamine-6-phosphate isomerase family. NagB subfamily.

It catalyses the reaction alpha-D-glucosamine 6-phosphate + H2O = beta-D-fructose 6-phosphate + NH4(+). It participates in amino-sugar metabolism; N-acetylneuraminate degradation; D-fructose 6-phosphate from N-acetylneuraminate: step 5/5. Catalyzes the reversible isomerization-deamination of glucosamine 6-phosphate (GlcN6P) to form fructose 6-phosphate (Fru6P) and ammonium ion. The polypeptide is Glucosamine-6-phosphate deaminase (Bacillus cereus (strain G9842)).